The following is a 383-amino-acid chain: tRNA(Met) cytidine acetate ligase (383 aa).

ATP contacts are provided by residues 7-20 (ISEYNPFHNGHLYQ), glycine 102, asparagine 160, and 181-182 (RI).

It belongs to the TmcAL family.

The protein resides in the cytoplasm. It catalyses the reaction cytidine(34) in elongator tRNA(Met) + acetate + ATP = N(4)-acetylcytidine(34) in elongator tRNA(Met) + AMP + diphosphate. Its function is as follows. Catalyzes the formation of N(4)-acetylcytidine (ac(4)C) at the wobble position of elongator tRNA(Met), using acetate and ATP as substrates. First activates an acetate ion to form acetyladenylate (Ac-AMP) and then transfers the acetyl group to tRNA to form ac(4)C34. The chain is tRNA(Met) cytidine acetate ligase from Exiguobacterium sibiricum (strain DSM 17290 / CCUG 55495 / CIP 109462 / JCM 13490 / 255-15).